The chain runs to 549 residues: Hydroxylamine reductase (549 aa).

Residues cysteine 3, cysteine 6, cysteine 18, and cysteine 25 each coordinate [2Fe-2S] cluster. Residues histidine 248, glutamate 272, cysteine 316, cysteine 404, cysteine 432, cysteine 457, glutamate 491, and lysine 493 each contribute to the hybrid [4Fe-2O-2S] cluster site. A Cysteine persulfide modification is found at cysteine 404.

Belongs to the HCP family. It depends on [2Fe-2S] cluster as a cofactor. Hybrid [4Fe-2O-2S] cluster serves as cofactor.

It is found in the cytoplasm. It carries out the reaction A + NH4(+) + H2O = hydroxylamine + AH2 + H(+). In terms of biological role, catalyzes the reduction of hydroxylamine to form NH(3) and H(2)O. This chain is Hydroxylamine reductase, found in Aeromonas hydrophila subsp. hydrophila (strain ATCC 7966 / DSM 30187 / BCRC 13018 / CCUG 14551 / JCM 1027 / KCTC 2358 / NCIMB 9240 / NCTC 8049).